Consider the following 123-residue polypeptide: Loki profilin-3 (123 aa).

It belongs to the Asgard profilin family.

The protein resides in the cytoplasm. It localises to the cytoskeleton. Binds to actin and affects the structure of the cytoskeleton. At high concentrations inhibits spontaneous rabbit actin nucleation. This strongly suggests this archaea has a profilin-regulated actin system, and actin-type genes can be identified in this organism. This Lokiarchaeum sp. (strain GC14_75) protein is Loki profilin-3.